The following is a 232-amino-acid chain: Phosphatidylserine decarboxylase proenzyme (232 aa).

S190 (schiff-base intermediate with substrate; via pyruvic acid) is an active-site residue. S190 is subject to Pyruvic acid (Ser); by autocatalysis.

Belongs to the phosphatidylserine decarboxylase family. PSD-A subfamily. As to quaternary structure, heterodimer of a large membrane-associated beta subunit and a small pyruvoyl-containing alpha subunit. Pyruvate serves as cofactor. Post-translationally, is synthesized initially as an inactive proenzyme. Formation of the active enzyme involves a self-maturation process in which the active site pyruvoyl group is generated from an internal serine residue via an autocatalytic post-translational modification. Two non-identical subunits are generated from the proenzyme in this reaction, and the pyruvate is formed at the N-terminus of the alpha chain, which is derived from the carboxyl end of the proenzyme. The post-translation cleavage follows an unusual pathway, termed non-hydrolytic serinolysis, in which the side chain hydroxyl group of the serine supplies its oxygen atom to form the C-terminus of the beta chain, while the remainder of the serine residue undergoes an oxidative deamination to produce ammonia and the pyruvoyl prosthetic group on the alpha chain.

The protein localises to the cell membrane. It catalyses the reaction a 1,2-diacyl-sn-glycero-3-phospho-L-serine + H(+) = a 1,2-diacyl-sn-glycero-3-phosphoethanolamine + CO2. It participates in phospholipid metabolism; phosphatidylethanolamine biosynthesis; phosphatidylethanolamine from CDP-diacylglycerol: step 2/2. Catalyzes the formation of phosphatidylethanolamine (PtdEtn) from phosphatidylserine (PtdSer). Important for establishment of root nodule symbiosis with the host plant. The protein is Phosphatidylserine decarboxylase proenzyme of Rhizobium meliloti (strain 1021) (Ensifer meliloti).